We begin with the raw amino-acid sequence, 1632 residues long: uncharacterized protein (1632 aa).

The span at Met-1–Asn-15 shows a compositional bias: polar residues. A disordered region spans residues Met-1–Glu-23. At Met-1–Arg-63 the chain is on the cytoplasmic side. A helical transmembrane segment spans residues Val-64 to Met-86. Residues Thr-87–Glu-1632 are Extracellular-facing. N-linked (GlcNAc...) asparagine; by host glycosylation is found at Asn-149 and Asn-274. The interval Glu-516–Gly-538 is disordered. N-linked (GlcNAc...) asparagine; by host glycans are attached at residues Asn-654, Asn-719, and Asn-797. Residues Ile-838 to Asp-890 form a disordered region. 2 stretches are compositionally biased toward basic and acidic residues: residues Lys-842–Gly-853 and Gly-875–Asp-890. N-linked (GlcNAc...) asparagine; by host glycans are attached at residues Asn-1012, Asn-1031, Asn-1261, Asn-1339, Asn-1511, and Asn-1546. The interval Pro-1603 to Glu-1632 is disordered. Residues Asp-1607–Glu-1632 show a composition bias toward acidic residues.

It is found in the host membrane. This is an uncharacterized protein from Ostreid herpesvirus 1 (isolate France) (OsHV-1).